A 385-amino-acid polypeptide reads, in one-letter code: Lipid-A-disaccharide synthase 2 (385 aa).

It belongs to the LpxB family.

The enzyme catalyses a lipid X + a UDP-2-N,3-O-bis[(3R)-3-hydroxyacyl]-alpha-D-glucosamine = a lipid A disaccharide + UDP + H(+). It participates in bacterial outer membrane biogenesis; LPS lipid A biosynthesis. Functionally, condensation of UDP-2,3-diacylglucosamine and 2,3-diacylglucosamine-1-phosphate to form lipid A disaccharide, a precursor of lipid A, a phosphorylated glycolipid that anchors the lipopolysaccharide to the outer membrane of the cell. In Legionella pneumophila (strain Lens), this protein is Lipid-A-disaccharide synthase 2.